Reading from the N-terminus, the 512-residue chain is GMP synthase [glutamine-hydrolyzing] (512 aa).

Positions 7–197 constitute a Glutamine amidotransferase type-1 domain; sequence TIIVLDFGSQ…VFGVCGCSEG (191 aa). Catalysis depends on C84, which acts as the Nucleophile. Active-site residues include H171 and E173. One can recognise a GMPS ATP-PPase domain in the interval 198 to 387; that stretch reads WNMENFIEVE…LGIPDEIVWR (190 aa). Position 225–231 (225–231) interacts with ATP; it reads SGGVDSS.

In terms of assembly, homodimer.

The catalysed reaction is XMP + L-glutamine + ATP + H2O = GMP + L-glutamate + AMP + diphosphate + 2 H(+). It functions in the pathway purine metabolism; GMP biosynthesis; GMP from XMP (L-Gln route): step 1/1. Functionally, catalyzes the synthesis of GMP from XMP. This chain is GMP synthase [glutamine-hydrolyzing], found in Bacillus cytotoxicus (strain DSM 22905 / CIP 110041 / 391-98 / NVH 391-98).